The primary structure comprises 269 residues: Trans-aconitate 2-methyltransferase (269 aa).

The protein belongs to the methyltransferase superfamily. Tam family.

The protein localises to the cytoplasm. It catalyses the reaction trans-aconitate + S-adenosyl-L-methionine = (E)-3-(methoxycarbonyl)pent-2-enedioate + S-adenosyl-L-homocysteine. Functionally, catalyzes the S-adenosylmethionine monomethyl esterification of trans-aconitate. In Streptomyces avermitilis (strain ATCC 31267 / DSM 46492 / JCM 5070 / NBRC 14893 / NCIMB 12804 / NRRL 8165 / MA-4680), this protein is Trans-aconitate 2-methyltransferase.